An 85-amino-acid polypeptide reads, in one-letter code: Small ribosomal subunit protein uS17 (85 aa).

Belongs to the universal ribosomal protein uS17 family. As to quaternary structure, part of the 30S ribosomal subunit.

Functionally, one of the primary rRNA binding proteins, it binds specifically to the 5'-end of 16S ribosomal RNA. The sequence is that of Small ribosomal subunit protein uS17 from Pasteurella multocida (strain Pm70).